Consider the following 729-residue polypeptide: Phosphoribosylformylglycinamidine synthase subunit PurL (729 aa).

The active site involves His42. 2 residues coordinate ATP: Tyr45 and Lys84. Residue Glu86 participates in Mg(2+) binding. Substrate is bound by residues 87-90 (SHNH) and Arg109. The active-site Proton acceptor is His88. Position 110 (Asp110) interacts with Mg(2+). Gln238 provides a ligand contact to substrate. Asp266 contributes to the Mg(2+) binding site. 310–312 (ESQ) is a substrate binding site. Residues Asp492 and Gly529 each contribute to the ATP site. A Mg(2+)-binding site is contributed by Asn530. Ser532 contacts substrate.

This sequence belongs to the FGAMS family. In terms of assembly, monomer. Part of the FGAM synthase complex composed of 1 PurL, 1 PurQ and 2 PurS subunits.

The protein localises to the cytoplasm. The enzyme catalyses N(2)-formyl-N(1)-(5-phospho-beta-D-ribosyl)glycinamide + L-glutamine + ATP + H2O = 2-formamido-N(1)-(5-O-phospho-beta-D-ribosyl)acetamidine + L-glutamate + ADP + phosphate + H(+). The protein operates within purine metabolism; IMP biosynthesis via de novo pathway; 5-amino-1-(5-phospho-D-ribosyl)imidazole from N(2)-formyl-N(1)-(5-phospho-D-ribosyl)glycinamide: step 1/2. In terms of biological role, part of the phosphoribosylformylglycinamidine synthase complex involved in the purines biosynthetic pathway. Catalyzes the ATP-dependent conversion of formylglycinamide ribonucleotide (FGAR) and glutamine to yield formylglycinamidine ribonucleotide (FGAM) and glutamate. The FGAM synthase complex is composed of three subunits. PurQ produces an ammonia molecule by converting glutamine to glutamate. PurL transfers the ammonia molecule to FGAR to form FGAM in an ATP-dependent manner. PurS interacts with PurQ and PurL and is thought to assist in the transfer of the ammonia molecule from PurQ to PurL. This Campylobacter concisus (strain 13826) protein is Phosphoribosylformylglycinamidine synthase subunit PurL.